The following is a 292-amino-acid chain: Glycine--tRNA ligase alpha subunit (292 aa).

It belongs to the class-II aminoacyl-tRNA synthetase family. In terms of assembly, tetramer of two alpha and two beta subunits.

Its subcellular location is the cytoplasm. The enzyme catalyses tRNA(Gly) + glycine + ATP = glycyl-tRNA(Gly) + AMP + diphosphate. The polypeptide is Glycine--tRNA ligase alpha subunit (Pelobacter propionicus (strain DSM 2379 / NBRC 103807 / OttBd1)).